We begin with the raw amino-acid sequence, 330 residues long: Stomatin-1 (330 aa).

Over residues 1–19 the composition is skewed to polar residues; the sequence is MQPSETVEMQEMAQPSGQQ. Residues 1–27 form a disordered region; that stretch reads MQPSETVEMQEMAQPSGQQRDVEARVQ. Residues 42 to 62 traverse the membrane as a helical segment; the sequence is MFCIAMSYVLIFLTFPVSVFM.

The protein belongs to the band 7/mec-2 family.

It is found in the membrane. The sequence is that of Stomatin-1 (sto-1) from Caenorhabditis elegans.